The chain runs to 200 residues: MPIGTPSVPYRLPGSQMERWVDIYTRLGVERILFLGSEVNDGIANSLVAQMLYLDSEDSSKPIYLYINSPGGSVTAGLAIYDTIQYVKSEVVTICVGLAASMGAFLLAAGTKGKRVALPHSRIMIHQPLGGTSRRQASDIEIEAREILRMKDMLNHSLADMSGQTFEKIEKDTDRDYFLSAEEAMAYGLIDRVISHPTEA.

Ser-101 serves as the catalytic Nucleophile. His-126 is a catalytic residue.

The protein belongs to the peptidase S14 family. Fourteen ClpP subunits assemble into 2 heptameric rings which stack back to back to give a disk-like structure with a central cavity, resembling the structure of eukaryotic proteasomes.

The protein resides in the cytoplasm. It catalyses the reaction Hydrolysis of proteins to small peptides in the presence of ATP and magnesium. alpha-casein is the usual test substrate. In the absence of ATP, only oligopeptides shorter than five residues are hydrolyzed (such as succinyl-Leu-Tyr-|-NHMec, and Leu-Tyr-Leu-|-Tyr-Trp, in which cleavage of the -Tyr-|-Leu- and -Tyr-|-Trp bonds also occurs).. Its function is as follows. Cleaves peptides in various proteins in a process that requires ATP hydrolysis. Has a chymotrypsin-like activity. Plays a major role in the degradation of misfolded proteins. This is ATP-dependent Clp protease proteolytic subunit 3 from Synechococcus sp. (strain CC9902).